We begin with the raw amino-acid sequence, 184 residues long: Non-fimbrial adhesin 1 (184 aa).

Residues 1-28 form the signal peptide; the sequence is MKAKKYENQIYNENGRRCQRHGRRLAIA. An intrachain disulfide couples Cys57 to Cys91.

Forms a polymeric structure, which disintegrates with elevated temperature into a monomer but with some relatively stable dimers.

The chain is Non-fimbrial adhesin 1 (nfaA) from Escherichia coli.